A 389-amino-acid chain; its full sequence is Metal tolerance protein 2 (389 aa).

Topologically, residues 1 to 81 (MGFRLAHLAA…GGEASERIFR (81 aa)) are cytoplasmic. A helical membrane pass occupies residues 82–102 (LGLAADVVLTVGKAVTGYLSG). Residues 103 to 104 (ST) lie on the Vacuolar side of the membrane. The helical transmembrane segment at 105–125 (AIAADAAHSLSDIVLSGVALL) threads the bilayer. Residues 126–148 (SYKAAKAPRDKEHPYGHGKFESL) are Cytoplasmic-facing. A helical membrane pass occupies residues 149 to 169 (GALGISSMLLVTAGGIAWHAF). At 170 to 206 (DVLQGVMSSAPDIIGNVSHAHHSHGSSGHHHGIDLEH) the chain is on the vacuolar side. The helical transmembrane segment at 207 to 227 (PILALSVTAFAISVKEGLYWI) threads the bilayer. The Cytoplasmic segment spans residues 228–250 (TKRAGEKEGSGLMKANAWHHRSD). A helical membrane pass occupies residues 251-271 (AISSVVALLGVGGSILGVPYL). At 272 to 275 (DPLA) the chain is on the vacuolar side. Residues 276 to 296 (GLVVSGMILKAGVHTGYESVL) form a helical membrane-spanning segment. Residues 297-389 (ELVDAAVDPS…SLQPLNQNAL (93 aa)) are Cytoplasmic-facing.

The protein belongs to the cation diffusion facilitator (CDF) transporter (TC 2.A.4) family. SLC30A subfamily.

The protein resides in the vacuole membrane. Its function is as follows. Involved in sequestration of excess metal in the cytoplasm into vacuoles to maintain metal homeostasis. The polypeptide is Metal tolerance protein 2 (MTP2) (Oryza sativa subsp. japonica (Rice)).